Here is a 544-residue protein sequence, read N- to C-terminus: uncharacterized protein (544 aa).

The N-terminal stretch at 1-34 (MIARRMLCARPWGPSCVVCALCGALAALVPAVGA) is a signal peptide. A disordered region spans residues 38 to 69 (AVPAPGTPAPPAHTASEAVPPAPEPRAEGEQP).

It belongs to the TP096X family.

This is an uncharacterized protein from Treponema pallidum (strain Nichols).